Reading from the N-terminus, the 641-residue chain is Soluble starch synthase 1, chloroplastic/amyloplastic (641 aa).

The N-terminal 113 residues, 1–113, are a transit peptide targeting the chloroplast; the sequence is MATAAGMGIG…DSIDKTIFVA (113 aa). Positions 62-96 are disordered; that stretch reads TFLVPTSTPPAPTQSPAPAPTPPPLPDSGVGEIEP. The segment covering 68 to 87 has biased composition (pro residues); that stretch reads STPPAPTQSPAPAPTPPPLP. Lys147 is an ADP-alpha-D-glucose binding site.

Belongs to the glycosyltransferase 1 family. Bacterial/plant glycogen synthase subfamily.

It is found in the plastid. Its subcellular location is the chloroplast. It localises to the amyloplast. It carries out the reaction [(1-&gt;4)-alpha-D-glucosyl](n) + ADP-alpha-D-glucose = [(1-&gt;4)-alpha-D-glucosyl](n+1) + ADP + H(+). Its pathway is glycan biosynthesis; starch biosynthesis. In Oryza sativa subsp. indica (Rice), this protein is Soluble starch synthase 1, chloroplastic/amyloplastic.